Consider the following 387-residue polypeptide: Eukaryotic translation initiation factor 3 subunit M (387 aa).

The PCI domain maps to 181-340 (RSSKVMIELL…RKVHISSTMH (160 aa)).

This sequence belongs to the eIF-3 subunit M family. As to quaternary structure, component of the eukaryotic translation initiation factor 3 (eIF-3) complex. The eIF-3 complex interacts with pix.

The protein resides in the cytoplasm. It localises to the golgi apparatus. Its function is as follows. Component of the eukaryotic translation initiation factor 3 (eIF-3) complex, which is involved in protein synthesis of a specialized repertoire of mRNAs and, together with other initiation factors, stimulates binding of mRNA and methionyl-tRNAi to the 40S ribosome. The eIF-3 complex specifically targets and initiates translation of a subset of mRNAs involved in cell proliferation. The polypeptide is Eukaryotic translation initiation factor 3 subunit M (Drosophila willistoni (Fruit fly)).